The chain runs to 680 residues: DNA-directed RNA polymerase subunit beta' (680 aa).

Zn(2+) is bound by residues Cys69, Cys71, Cys87, and Cys90. 3 residues coordinate Mg(2+): Asp489, Asp491, and Asp493.

The protein belongs to the RNA polymerase beta' chain family. RpoC1 subfamily. In terms of assembly, in plastids the minimal PEP RNA polymerase catalytic core is composed of four subunits: alpha, beta, beta', and beta''. When a (nuclear-encoded) sigma factor is associated with the core the holoenzyme is formed, which can initiate transcription. Mg(2+) is required as a cofactor. Requires Zn(2+) as cofactor.

The protein resides in the plastid. It localises to the chloroplast. The catalysed reaction is RNA(n) + a ribonucleoside 5'-triphosphate = RNA(n+1) + diphosphate. Its function is as follows. DNA-dependent RNA polymerase catalyzes the transcription of DNA into RNA using the four ribonucleoside triphosphates as substrates. This is DNA-directed RNA polymerase subunit beta' from Lobularia maritima (Sweet alyssum).